The primary structure comprises 265 residues: Shikimate dehydrogenase (NADP(+)) (265 aa).

Shikimate contacts are provided by residues S15–S17 and T62. The active-site Proton acceptor is K66. Positions 87 and 102 each coordinate shikimate. Residues G125 to A129, N149 to K154, and L209 contribute to the NADP(+) site. Y211 lines the shikimate pocket. G233 serves as a coordination point for NADP(+).

Belongs to the shikimate dehydrogenase family. Homodimer.

It catalyses the reaction shikimate + NADP(+) = 3-dehydroshikimate + NADPH + H(+). The protein operates within metabolic intermediate biosynthesis; chorismate biosynthesis; chorismate from D-erythrose 4-phosphate and phosphoenolpyruvate: step 4/7. Functionally, involved in the biosynthesis of the chorismate, which leads to the biosynthesis of aromatic amino acids. Catalyzes the reversible NADPH linked reduction of 3-dehydroshikimate (DHSA) to yield shikimate (SA). This chain is Shikimate dehydrogenase (NADP(+)), found in Legionella pneumophila subsp. pneumophila (strain Philadelphia 1 / ATCC 33152 / DSM 7513).